The following is a 197-amino-acid chain: Rac-like GTP-binding protein RHO1 (197 aa).

13–20 (GDGAVGKT) is a GTP binding site. Positions 35–43 (YVPTVFDNF) match the Effector region motif. Residues 60–64 (DTAGQ) and 118–121 (TKLD) each bind GTP. At Cys-194 the chain carries Cysteine methyl ester. Residue Cys-194 is the site of S-geranylgeranyl cysteine attachment. A propeptide spans 195–197 (SIL) (removed in mature form).

It belongs to the small GTPase superfamily. Rho family.

Its subcellular location is the cytoplasm. It is found in the membrane. In terms of biological role, inactive GDP-bound Rho GTPases reside in the cytosol, are found in a complex with Rho GDP-dissociation inhibitors (Rho GDIs), and are released from the GDI protein in order to translocate to membranes upon activation. The sequence is that of Rac-like GTP-binding protein RHO1 (RHO1) from Beta vulgaris (Sugar beet).